The chain runs to 445 residues: Histone acetyltransferase of the MYST family 2 (445 aa).

The span at 1–23 shows a compositional bias: polar residues; that stretch reads MGSSANTETNGNAPPPSSNQKPP. Residues 1–58 are disordered; that stretch reads MGSSANTETNGNAPPPSSNQKPPATNGVDGSHPPPPPLTPDQAIIESDPSKKRKMGML. Positions 60 to 118 constitute a Tudor-knot domain; it reads LEVGTRVMCRWRDGKHHPVKVIERRRIHNGGQNDYEYYVHYTEFNRRLDEWTQLDQLDL. The MYST-type HAT domain maps to 169 to 440; the sequence is TKVKNISTIE…VDASKLIWTP (272 aa). Residues 202–227 form a C2HC MYST-type zinc finger; that stretch reads LFFCEFCLNFMKRKEQLQRHMRKCDL. At lysine 269 the chain carries N6-acetyllysine; by autocatalysis. Residues 312–314 and 319–325 contribute to the acetyl-CoA site; these read ILT and QRKGYGK. Glutamate 345 (proton donor/acceptor) is an active-site residue. Serine 349 contributes to the acetyl-CoA binding site.

Belongs to the MYST (SAS/MOZ) family. As to quaternary structure, interacts with MRG1 and MRG2. Autoacetylation at Lys-269 is required for proper function. Expressed in cotyledons, leaves, stems, roots and, at higher levels in developing flowers, particularly in the anthers and gynoecia. Constitutively expressed in all tissues, predominantly in shoot apical meristem.

Its subcellular location is the nucleus. The enzyme catalyses L-lysyl-[protein] + acetyl-CoA = N(6)-acetyl-L-lysyl-[protein] + CoA + H(+). Functionally, histone acetyltransferase which may be involved in transcriptional activation. Acetylates 'Lys-5' of histone H4 (H4K5ac). Essential for gametophyte development. Negative regulator of flowering controlling the H4K5ac levels in the FLC chromatin. This Arabidopsis thaliana (Mouse-ear cress) protein is Histone acetyltransferase of the MYST family 2.